We begin with the raw amino-acid sequence, 294 residues long: Bifunctional protein FolD (294 aa).

NADP(+) contacts are provided by residues 169-171, T196, and V237; that span reads GRG.

It belongs to the tetrahydrofolate dehydrogenase/cyclohydrolase family. In terms of assembly, homodimer.

It catalyses the reaction (6R)-5,10-methylene-5,6,7,8-tetrahydrofolate + NADP(+) = (6R)-5,10-methenyltetrahydrofolate + NADPH. The catalysed reaction is (6R)-5,10-methenyltetrahydrofolate + H2O = (6R)-10-formyltetrahydrofolate + H(+). The protein operates within one-carbon metabolism; tetrahydrofolate interconversion. Functionally, catalyzes the oxidation of 5,10-methylenetetrahydrofolate to 5,10-methenyltetrahydrofolate and then the hydrolysis of 5,10-methenyltetrahydrofolate to 10-formyltetrahydrofolate. This chain is Bifunctional protein FolD, found in Renibacterium salmoninarum (strain ATCC 33209 / DSM 20767 / JCM 11484 / NBRC 15589 / NCIMB 2235).